A 621-amino-acid polypeptide reads, in one-letter code: uncharacterized protein (621 aa).

5 positions are modified to phosphoserine: Ser-269, Ser-271, Ser-274, Ser-290, and Ser-292. 6 LRR repeats span residues 333 to 354, 357 to 379, 380 to 401, 404 to 425, 426 to 447, and 451 to 472; these read QLLYLRCSSCKLKSIPKNVFLS, SLVSLDLSGNELTEIPYALGELP, QLCSLNLASNKITGCRTFYHIS, HLQILVLSRNHLTSLSGLENVP, SLEKLDIRDNSITDVVEFRRLV, and NFEEAYLSLNPFTKTYSSYRIT. Residues 552 to 581 are disordered; that stretch reads SKNASGGDTSSNVSLLNGSASEEIPQNTES.

It is found in the cytoplasm. Its subcellular location is the nucleus. The protein resides in the vacuole membrane. This is an uncharacterized protein from Schizosaccharomyces pombe (strain 972 / ATCC 24843) (Fission yeast).